A 157-amino-acid chain; its full sequence is Lipoprotein signal peptidase (157 aa).

3 helical membrane passes run 10–30, 58–78, and 84–104; these read LIFI…KYAI, FLEG…FIFL, and LFKN…SNVL. Residues aspartate 114 and aspartate 131 contribute to the active site. The helical transmembrane segment at 122 to 142 threads the bilayer; that stretch reads FDFAIFNFADVMIDVGVGVLL.

This sequence belongs to the peptidase A8 family.

The protein resides in the cell inner membrane. It carries out the reaction Release of signal peptides from bacterial membrane prolipoproteins. Hydrolyzes -Xaa-Yaa-Zaa-|-(S,diacylglyceryl)Cys-, in which Xaa is hydrophobic (preferably Leu), and Yaa (Ala or Ser) and Zaa (Gly or Ala) have small, neutral side chains.. Its pathway is protein modification; lipoprotein biosynthesis (signal peptide cleavage). In terms of biological role, this protein specifically catalyzes the removal of signal peptides from prolipoproteins. In Helicobacter pylori (strain Shi470), this protein is Lipoprotein signal peptidase.